We begin with the raw amino-acid sequence, 333 residues long: Protein translocase subunit SecF (333 aa).

6 helical membrane passes run 27–47, 152–172, 180–200, 207–227, 253–275, and 285–307; these read AIVM…NFGI, VWTA…YIWV, LGAV…FAVL, TTVA…VVVF, TLSR…LIWG, and AMVW…IVLF.

This sequence belongs to the SecD/SecF family. SecF subfamily. Forms a complex with SecD. Part of the essential Sec protein translocation apparatus which comprises SecA, SecYEG and auxiliary proteins SecDF-YajC and YidC.

Its subcellular location is the cell inner membrane. Functionally, part of the Sec protein translocase complex. Interacts with the SecYEG preprotein conducting channel. SecDF uses the proton motive force (PMF) to complete protein translocation after the ATP-dependent function of SecA. This chain is Protein translocase subunit SecF, found in Rhodobacter capsulatus (strain ATCC BAA-309 / NBRC 16581 / SB1003).